Reading from the N-terminus, the 321-residue chain is Glycerol-3-phosphate dehydrogenase [NAD(P)+] (321 aa).

NADPH-binding residues include Ser-10, Trp-11, Arg-31, Arg-32, Tyr-47, and Lys-98. Sn-glycerol 3-phosphate contacts are provided by Lys-98, Gly-125, and Ser-127. NADPH is bound at residue Ala-129. Positions 177, 230, 240, 241, and 242 each coordinate sn-glycerol 3-phosphate. Lys-177 (proton acceptor) is an active-site residue. NADPH is bound at residue Arg-241. 2 residues coordinate NADPH: Val-265 and Glu-267.

This sequence belongs to the NAD-dependent glycerol-3-phosphate dehydrogenase family.

It localises to the cytoplasm. The enzyme catalyses sn-glycerol 3-phosphate + NAD(+) = dihydroxyacetone phosphate + NADH + H(+). It carries out the reaction sn-glycerol 3-phosphate + NADP(+) = dihydroxyacetone phosphate + NADPH + H(+). The protein operates within membrane lipid metabolism; glycerophospholipid metabolism. In terms of biological role, catalyzes the reduction of the glycolytic intermediate dihydroxyacetone phosphate (DHAP) to sn-glycerol 3-phosphate (G3P), the key precursor for phospholipid synthesis. The sequence is that of Glycerol-3-phosphate dehydrogenase [NAD(P)+] from Thermotoga sp. (strain RQ2).